The sequence spans 343 residues: Uroporphyrinogen decarboxylase (343 aa).

Substrate is bound by residues 21–25, Asp71, Tyr148, Ser203, and His316; that span reads RQAGR.

This sequence belongs to the uroporphyrinogen decarboxylase family. As to quaternary structure, homodimer.

The protein localises to the cytoplasm. The enzyme catalyses uroporphyrinogen III + 4 H(+) = coproporphyrinogen III + 4 CO2. The protein operates within porphyrin-containing compound metabolism; protoporphyrin-IX biosynthesis; coproporphyrinogen-III from 5-aminolevulinate: step 4/4. Functionally, catalyzes the decarboxylation of four acetate groups of uroporphyrinogen-III to yield coproporphyrinogen-III. The chain is Uroporphyrinogen decarboxylase from Campylobacter fetus subsp. fetus (strain 82-40).